A 481-amino-acid chain; its full sequence is Probable cytosol aminopeptidase (481 aa).

Residues K247 and D252 each coordinate Mn(2+). K259 is an active-site residue. Positions 270, 329, and 331 each coordinate Mn(2+). The active site involves R333.

It belongs to the peptidase M17 family. The cofactor is Mn(2+).

Its subcellular location is the cytoplasm. The enzyme catalyses Release of an N-terminal amino acid, Xaa-|-Yaa-, in which Xaa is preferably Leu, but may be other amino acids including Pro although not Arg or Lys, and Yaa may be Pro. Amino acid amides and methyl esters are also readily hydrolyzed, but rates on arylamides are exceedingly low.. The catalysed reaction is Release of an N-terminal amino acid, preferentially leucine, but not glutamic or aspartic acids.. Its function is as follows. Presumably involved in the processing and regular turnover of intracellular proteins. Catalyzes the removal of unsubstituted N-terminal amino acids from various peptides. This is Probable cytosol aminopeptidase from Clostridium tetani (strain Massachusetts / E88).